The sequence spans 1357 residues: Regulator of V-ATPase in vacuolar membrane protein 1 (1357 aa).

WD repeat units follow at residues 98 to 134 (HDDTPVNCLRWSSDNELAIGSDFLSFWKIKDNFGVYQ), 142 to 182 (KQPK…GEQA), 190 to 239 (PHPK…KNHT), 384 to 423 (GHNKSVQKLVRSSDGEALLTTSRFSENGVWYPQKLNHGVS), 431 to 470 (QTESPIKFAVVHELGKQVICLLENGALQAWECPTNRKEDS), 595 to 636 (INTG…LEYE), 638 to 679 (TFHN…YTNN), and 898 to 939 (QKSI…RIAY). The disordered stretch occupies residues 1243-1357 (GSPSASDIES…ITKNLLDDFV (115 aa)). Ser-1244 and Ser-1248 each carry phosphoserine. A compositionally biased stretch (low complexity) spans 1272-1288 (STSSNSLAQSSSSAPRS). Positions 1320–1332 (SENRKDKLSKDIL) are enriched in basic and acidic residues.

Component of the RAVE complex composed of RAV1, RAV2 and CBF3D/SKP1. Within the complex, it interacts directly with RAV2 and CBF3D. Interacts with the V-ATPase V1 subunits VMA1, VMA2 and VMA8.

It localises to the endomembrane system. Functionally, component of the RAVE complex, which is required for stable assembly of the vacuolar ATPase complex V-ATPase under many conditions. Required for transport between the early endosome and the late endosome/prevacuolar compartment (PVC), suggesting that assembly of vacuolar ATPase at the early endosome is required for transport from the early endosome to the PVC. This is Regulator of V-ATPase in vacuolar membrane protein 1 (RAV1) from Saccharomyces cerevisiae (strain ATCC 204508 / S288c) (Baker's yeast).